A 128-amino-acid polypeptide reads, in one-letter code: Large ribosomal subunit protein uL24 (128 aa).

This sequence belongs to the universal ribosomal protein uL24 family. As to quaternary structure, part of the 50S ribosomal subunit.

Functionally, one of two assembly initiator proteins, it binds directly to the 5'-end of the 23S rRNA, where it nucleates assembly of the 50S subunit. Located at the polypeptide exit tunnel on the outside of the subunit. This chain is Large ribosomal subunit protein uL24, found in Pyrobaculum calidifontis (strain DSM 21063 / JCM 11548 / VA1).